A 368-amino-acid polypeptide reads, in one-letter code: MAMLVEPPNGIKQQGKHYYSMWQTLFEIDTKYVPIKPIGRGAYGVVCSSINRETNERVAIKKIHNVFENRVDALRTLRELKLLRHVRHENVIALKDVMLPANRSSFKDVYLVYELMDTDLHQIIKSSQSLSDDHCKYFLFQLLRGLKYLHSANILHRDLKPGNLLVNANCDLKICDFGLARTSQGNEQFMTEYVVTRWYRAPELLLCCDNYGTSIDVWSVGCIFAEILGRKPIFPGTECLNQLKLIINVVGSQQESDIRFIDNPKARRFIKSLPYSRGTHLSNLYPQANPLAIDLLQRMLVFDPTKRISVTDALLHPYMAGLFDPGSNPPAHVPISLDIDENMEEPVIREMMWNEMLYYHPEAEISNA.

In terms of domain architecture, Protein kinase spans 32-319 (YVPIKPIGRG…VTDALLHPYM (288 aa)). Residues 38–46 (IGRGAYGVV) and K61 each bind ATP. D158 acts as the Proton acceptor in catalysis. T191 is subject to Phosphothreonine. The TXY signature appears at 191 to 193 (TEY). Y193 bears the Phosphotyrosine mark. A Phosphothreonine modification is found at T196.

This sequence belongs to the protein kinase superfamily. CMGC Ser/Thr protein kinase family. MAP kinase subfamily. As to quaternary structure, interacts with MKK3. The cofactor is Mg(2+). Post-translationally, dually phosphorylated on Thr-191 and Tyr-193, which activates the enzyme.

The enzyme catalyses L-seryl-[protein] + ATP = O-phospho-L-seryl-[protein] + ADP + H(+). It carries out the reaction L-threonyl-[protein] + ATP = O-phospho-L-threonyl-[protein] + ADP + H(+). Its activity is regulated as follows. Activated by threonine and tyrosine phosphorylation. Activated in response to hydrogen peroxide. Activation is triggered by MAPKKK17 and MAPKKK18 in a MKK3-dependent manner. MKK3-MPK7 module acts as a positive regulator of PR1 gene expression. The polypeptide is Mitogen-activated protein kinase 7 (MPK7) (Arabidopsis thaliana (Mouse-ear cress)).